A 762-amino-acid polypeptide reads, in one-letter code: 5-methyltetrahydropteroyltriglutamate--homocysteine methyltransferase (762 aa).

5-methyltetrahydropteroyltri-L-glutamate-binding positions include 18 to 21 and Lys112; that span reads REWK. Residues 435–437 and Glu488 contribute to the L-homocysteine site; that span reads IGS. Residues 435-437 and Glu488 each bind L-methionine; that span reads IGS. Residues 519–520 and Trp565 contribute to the 5-methyltetrahydropteroyltri-L-glutamate site; that span reads RC. Position 603 (Asp603) interacts with L-homocysteine. Residue Asp603 participates in L-methionine binding. Glu609 contributes to the 5-methyltetrahydropteroyltri-L-glutamate binding site. Zn(2+) is bound by residues His645, Cys647, and Glu669. His698 serves as the catalytic Proton donor. Cys719 carries the post-translational modification S-bacillithiol cysteine disulfide. Zn(2+) is bound at residue Cys730.

Belongs to the vitamin-B12 independent methionine synthase family. Zn(2+) serves as cofactor. In response to oxidative stress, Cys-719 can react with bacillithiol (BSH) to form mixed disulfides. S-bacillithiolation leads to loss of catalytic activity and methionine auxotrophy.

The catalysed reaction is 5-methyltetrahydropteroyltri-L-glutamate + L-homocysteine = tetrahydropteroyltri-L-glutamate + L-methionine. The protein operates within amino-acid biosynthesis; L-methionine biosynthesis via de novo pathway; L-methionine from L-homocysteine (MetE route): step 1/1. In terms of biological role, catalyzes the transfer of a methyl group from 5-methyltetrahydrofolate to homocysteine resulting in methionine formation. The polypeptide is 5-methyltetrahydropteroyltriglutamate--homocysteine methyltransferase (Bacillus subtilis (strain 168)).